We begin with the raw amino-acid sequence, 1030 residues long: E3 ubiquitin-protein ligase mib1 (1030 aa).

Residues 6–74 (NNRVMMEGVG…AYDVRILDSA (69 aa)) form the MIB/HERC2 1 domain. A ZZ-type zinc finger spans residues 80–132 (HDGTMCDTCRQQPIIGIRWKCAECTNYDLCTTCYHGDKHHLRHRFYRITTPGS). Residues Cys85, Cys88, Cys100, Cys103, Cys109, Cys112, His118, and His122 each contribute to the Zn(2+) site. Positions 143–221 (SKKITARGIF…MSDLKCVQDA (79 aa)) constitute an MIB/HERC2 2 domain. ANK repeat units lie at residues 430–460 (DINEELVKAAANGDLAKVEDILKRPDVDVNG), 463–492 (AGHTAMQAASQNGHVDVLKLLLKHSVDLEA), 496–525 (DGDRAVHHASFGDEGSVIEVLHRGGADLNA), 529–558 (RRQTPLHIAVNKGHLQVVKTLLDFGCHPSL), 562–591 (EGDTPLHDAISKKRDDMLSVLLEAGADVTI), 595–627 (NGFNALHHAALRGNPSAMRVLLSKLPRPWIVDE), 631–661 (DGYTALHLAALNNHVEVAELLVHQGNANLDV), 665–694 (NQQTALHLAVERQHTQIVRLLVRAEAKLDV), and 698–727 (DGDTPLHEALRHHTLSQLRQLQDMQDVSKV). RING-type zinc fingers lie at residues 817 to 852 (CMVCSDMKRDTLFGPCGHIATCSLCSPRVKKCLICK) and 864 to 899 (CVVCSDKKAAVLFQPCGHMCACENCASLMKKCVQCR). Residues 957-986 (ALQRDKDNTNVNADVQKLQQQLQDIKEQTM) are a coiled coil. Residues 987 to 1020 (CPVCLDRLKNMIFMCGHGTCQLCGDRMSECPICR) form an RING-type 3 zinc finger.

Interacts with deltaA (dla) and deltaD (dld).

The protein resides in the cytoplasm. It is found in the cytoskeleton. It localises to the microtubule organizing center. The protein localises to the centrosome. Its subcellular location is the centriolar satellite. The protein resides in the cell membrane. The catalysed reaction is S-ubiquitinyl-[E2 ubiquitin-conjugating enzyme]-L-cysteine + [acceptor protein]-L-lysine = [E2 ubiquitin-conjugating enzyme]-L-cysteine + N(6)-ubiquitinyl-[acceptor protein]-L-lysine.. It functions in the pathway protein modification; protein ubiquitination. In terms of biological role, E3 ubiquitin-protein ligase that mediates ubiquitination of Delta receptors, which act as ligands of Notch proteins. Positively regulates the Delta-mediated Notch signaling by ubiquitinating the intracellular domain of Delta, leading to endocytosis of Delta receptors. It thereby participates in many processes regulated by the Notch signaling pathway, such as midline cell fate specification prior to germ layer formation, patterning of sensory cell differentiation in the ear, neurogenesis of the hindbrain and commitment to a secretory fate in the intestine. Essential for early embryonic development. In Danio rerio (Zebrafish), this protein is E3 ubiquitin-protein ligase mib1 (mib1).